We begin with the raw amino-acid sequence, 299 residues long: Craniofacial development protein 1 (299 aa).

Acidic residues-rich tracts occupy residues 1-18 (MEEF…DEDY) and 25-43 (YSED…DGEE). Disordered regions lie at residues 1–156 (MEEF…ELEK) and 192–224 (FFKQ…SSGM). Basic residues predominate over residues 49-65 (QGKKRKAQSIPARKRRQ). Over residues 70–94 (LEEEEEEDANSESEGSSSEEEDDAA) the composition is skewed to acidic residues. Phosphoserine occurs at positions 82, 85, and 86. The segment covering 95–112 (EQEKGIGSEDARKKKEDE) has biased composition (basic and acidic residues). Position 116 is a phosphoserine (S116). K150 is covalently cross-linked (Glycyl lysine isopeptide (Lys-Gly) (interchain with G-Cter in SUMO2)). The segment at 178–217 (VTKEVDATSKEAKSFFKQNEKEKPQANVPSALPSLPAGSG) is hydrophilic. Basic and acidic residues predominate over residues 192–201 (FFKQNEKEKP). A Phosphoserine modification is found at S216. The BCNT-C domain maps to 218–299 (LKRSSGMSSL…RDLRLSKMKP (82 aa)). At K219 the chain carries N6-methyllysine. S250 carries the post-translational modification Phosphoserine.

Post-translationally, phosphorylated by CK2 (casein kinase II) in vitro. As to expression, ubiquitous.

Its subcellular location is the chromosome. The protein resides in the centromere. It is found in the kinetochore. In terms of biological role, may play a role during embryogenesis. This is Craniofacial development protein 1 (CFDP1) from Homo sapiens (Human).